Reading from the N-terminus, the 348-residue chain is MNHYLRAIGSMLILVYSMLTAFLFIDKVFVNIIYFQGMFYTQIFGIPVFLFLNLVIILLCIIVGSILAYKINQQNQWIKSQIEHAIEGETVGINDQNIELYNETIDLYQTLVPLNQELHRLRMKTQNLTNENYNMNDVKVKKIIENERQRLARELHDSVSQQLFAASMMLSAIKETKLEAPLDQQIPVLEKMVQESQLEMRALLLHLRPLGLKDKSLGEGIKDLVIDLQKKVPMKVIHDIQDFKVPKGIEDHLFRITQEAISNTLRHSNGTKVTVELFNQQDYLLLRIQDNGKGFNVDEKLEQSYGLKNMRERALEIGATFHIVSLPDSGTRIEVKAPLNREDDNNDD.

2 helical membrane-spanning segments follow: residues 13–33 (ILVY…VNII) and 43–63 (IFGI…CIIV). Residues 150–341 (RLARELHDSV…RIEVKAPLNR (192 aa)) form the Histidine kinase domain.

The protein localises to the cell membrane. The catalysed reaction is ATP + protein L-histidine = ADP + protein N-phospho-L-histidine.. In terms of biological role, member of the two-component regulatory system VraS/VraR involved in the control of the cell wall peptidoglycan biosynthesis. Probably activates VraR by phosphorylation. The polypeptide is Sensor protein VraS (vraS) (Staphylococcus haemolyticus (strain JCSC1435)).